Here is a 208-residue protein sequence, read N- to C-terminus: Large ribosomal subunit protein uL3 (208 aa).

The interval 126-150 is disordered; that stretch reads NQSRGPMAHGSRYHRRPGSMGPVAP.

The protein belongs to the universal ribosomal protein uL3 family. Part of the 50S ribosomal subunit. Forms a cluster with proteins L14 and L19.

Functionally, one of the primary rRNA binding proteins, it binds directly near the 3'-end of the 23S rRNA, where it nucleates assembly of the 50S subunit. The protein is Large ribosomal subunit protein uL3 of Exiguobacterium sibiricum (strain DSM 17290 / CCUG 55495 / CIP 109462 / JCM 13490 / 255-15).